Consider the following 267-residue polypeptide: Small ribosomal subunit protein uS5 (267 aa).

Positions 1–37 (MADEAPARSGFRGGFGSRGGRGGRGRGRGRWARGRGK) are disordered. Over residues 11-20 (FRGGFGSRGG) the composition is skewed to gly residues. Residues 21–34 (RGGRGRGRGRWARG) are compositionally biased toward basic residues. Ser60 bears the Phosphoserine mark. In terms of domain architecture, S5 DRBM spans 85–148 (LKDEVLKIMP…ILAKLSVVPV (64 aa)).

It belongs to the universal ribosomal protein uS5 family.

In terms of biological role, component of the ribosome, a large ribonucleoprotein complex responsible for the synthesis of proteins in the cell. The small ribosomal subunit (SSU) binds messenger RNAs (mRNAs) and translates the encoded message by selecting cognate aminoacyl-transfer RNA (tRNA) molecules. The large subunit (LSU) contains the ribosomal catalytic site termed the peptidyl transferase center (PTC), which catalyzes the formation of peptide bonds, thereby polymerizing the amino acids delivered by tRNAs into a polypeptide chain. The nascent polypeptides leave the ribosome through a tunnel in the LSU and interact with protein factors that function in enzymatic processing, targeting, and the membrane insertion of nascent chains at the exit of the ribosomal tunnel. Plays a role in the assembly and function of the 40S ribosomal subunit. Mutations in this protein affects the control of translational fidelity. Involved in nucleolar processing of pre-18S ribosomal RNA and ribosome assembly. Has a specific developmental role during oogenesis. In Drosophila melanogaster (Fruit fly), this protein is Small ribosomal subunit protein uS5 (RpS2).